We begin with the raw amino-acid sequence, 333 residues long: Ketol-acid reductoisomerase (NADP(+)) (333 aa).

The KARI N-terminal Rossmann domain occupies 2-182 (AKIFYDSDCN…GASRAGIILT (181 aa)). NADP(+)-binding positions include 25–28 (FGSQ), S51, S53, and 83–86 (DEKQ). H108 is an active-site residue. G134 contributes to the NADP(+) binding site. Positions 183–328 (TFKEETETDL…KELRKMMPWI (146 aa)) constitute a KARI C-terminal knotted domain. Mg(2+)-binding residues include D191, E195, E227, and E231. Position 252 (S252) interacts with substrate.

The protein belongs to the ketol-acid reductoisomerase family. The cofactor is Mg(2+).

It carries out the reaction (2R)-2,3-dihydroxy-3-methylbutanoate + NADP(+) = (2S)-2-acetolactate + NADPH + H(+). The enzyme catalyses (2R,3R)-2,3-dihydroxy-3-methylpentanoate + NADP(+) = (S)-2-ethyl-2-hydroxy-3-oxobutanoate + NADPH + H(+). The protein operates within amino-acid biosynthesis; L-isoleucine biosynthesis; L-isoleucine from 2-oxobutanoate: step 2/4. It functions in the pathway amino-acid biosynthesis; L-valine biosynthesis; L-valine from pyruvate: step 2/4. In terms of biological role, involved in the biosynthesis of branched-chain amino acids (BCAA). Catalyzes an alkyl-migration followed by a ketol-acid reduction of (S)-2-acetolactate (S2AL) to yield (R)-2,3-dihydroxy-isovalerate. In the isomerase reaction, S2AL is rearranged via a Mg-dependent methyl migration to produce 3-hydroxy-3-methyl-2-ketobutyrate (HMKB). In the reductase reaction, this 2-ketoacid undergoes a metal-dependent reduction by NADPH to yield (R)-2,3-dihydroxy-isovalerate. In Caldicellulosiruptor bescii (strain ATCC BAA-1888 / DSM 6725 / KCTC 15123 / Z-1320) (Anaerocellum thermophilum), this protein is Ketol-acid reductoisomerase (NADP(+)).